The sequence spans 225 residues: PKHD-type hydroxylase YbiX (225 aa).

Positions 78-177 constitute a Fe2OG dioxygenase domain; the sequence is TLSTPLFNRY…RVASFMWIQS (100 aa). Positions 96, 98, and 158 each coordinate Fe cation. Arg-168 is a binding site for 2-oxoglutarate.

Requires Fe(2+) as cofactor. L-ascorbate is required as a cofactor.

The protein is PKHD-type hydroxylase YbiX of Shigella boydii serotype 18 (strain CDC 3083-94 / BS512).